Reading from the N-terminus, the 525-residue chain is GMP synthase [glutamine-hydrolyzing] (525 aa).

In terms of domain architecture, Glutamine amidotransferase type-1 spans 8-207; it reads KILILDFGSQ…ALDICECEAN (200 aa). Cys-85 (nucleophile) is an active-site residue. Catalysis depends on residues His-181 and Glu-183. Residues 208–400 enclose the GMPS ATP-PPase domain; sequence WKPTSIIEDA…LGLPYDMLYR (193 aa). 235–241 is an ATP binding site; that stretch reads SGGVDSS.

Homodimer.

The catalysed reaction is XMP + L-glutamine + ATP + H2O = GMP + L-glutamate + AMP + diphosphate + 2 H(+). The protein operates within purine metabolism; GMP biosynthesis; GMP from XMP (L-Gln route): step 1/1. Functionally, catalyzes the synthesis of GMP from XMP. The sequence is that of GMP synthase [glutamine-hydrolyzing] from Shewanella sediminis (strain HAW-EB3).